Consider the following 456-residue polypeptide: Bifunctional protein GlmU (456 aa).

The tract at residues 1-229 (MYNCAIILAA…FEETMGVNSR (229 aa)) is pyrophosphorylase. UDP-N-acetyl-alpha-D-glucosamine contacts are provided by residues 8 to 11 (LAAG), Lys-22, Gln-73, and 78 to 79 (GT). Asp-103 is a Mg(2+) binding site. Positions 140, 155, 170, and 227 each coordinate UDP-N-acetyl-alpha-D-glucosamine. A Mg(2+)-binding site is contributed by Asn-227. A linker region spans residues 230-250 (VQLAEAEKIMRNRINKIHMEN). The segment at 251–456 (GVTLIDHNNT…SWVYKKGLKK (206 aa)) is N-acetyltransferase. UDP-N-acetyl-alpha-D-glucosamine-binding residues include Arg-332 and Lys-350. His-362 functions as the Proton acceptor in the catalytic mechanism. Positions 365 and 376 each coordinate UDP-N-acetyl-alpha-D-glucosamine. Acetyl-CoA contacts are provided by residues 385–386 (NY), Ala-422, and Arg-439.

It in the N-terminal section; belongs to the N-acetylglucosamine-1-phosphate uridyltransferase family. The protein in the C-terminal section; belongs to the transferase hexapeptide repeat family. Homotrimer. The cofactor is Mg(2+).

The protein resides in the cytoplasm. The catalysed reaction is alpha-D-glucosamine 1-phosphate + acetyl-CoA = N-acetyl-alpha-D-glucosamine 1-phosphate + CoA + H(+). It carries out the reaction N-acetyl-alpha-D-glucosamine 1-phosphate + UTP + H(+) = UDP-N-acetyl-alpha-D-glucosamine + diphosphate. Its pathway is nucleotide-sugar biosynthesis; UDP-N-acetyl-alpha-D-glucosamine biosynthesis; N-acetyl-alpha-D-glucosamine 1-phosphate from alpha-D-glucosamine 6-phosphate (route II): step 2/2. The protein operates within nucleotide-sugar biosynthesis; UDP-N-acetyl-alpha-D-glucosamine biosynthesis; UDP-N-acetyl-alpha-D-glucosamine from N-acetyl-alpha-D-glucosamine 1-phosphate: step 1/1. It functions in the pathway bacterial outer membrane biogenesis; LPS lipid A biosynthesis. In terms of biological role, catalyzes the last two sequential reactions in the de novo biosynthetic pathway for UDP-N-acetylglucosamine (UDP-GlcNAc). The C-terminal domain catalyzes the transfer of acetyl group from acetyl coenzyme A to glucosamine-1-phosphate (GlcN-1-P) to produce N-acetylglucosamine-1-phosphate (GlcNAc-1-P), which is converted into UDP-GlcNAc by the transfer of uridine 5-monophosphate (from uridine 5-triphosphate), a reaction catalyzed by the N-terminal domain. The sequence is that of Bifunctional protein GlmU from Clostridium kluyveri (strain NBRC 12016).